The primary structure comprises 244 residues: tRNA (guanine-N(1)-)-methyltransferase (244 aa).

S-adenosyl-L-methionine is bound by residues glycine 120 and 140 to 145 (IGDYIL).

Belongs to the RNA methyltransferase TrmD family. In terms of assembly, homodimer.

The protein resides in the cytoplasm. The catalysed reaction is guanosine(37) in tRNA + S-adenosyl-L-methionine = N(1)-methylguanosine(37) in tRNA + S-adenosyl-L-homocysteine + H(+). In terms of biological role, specifically methylates guanosine-37 in various tRNAs. The polypeptide is tRNA (guanine-N(1)-)-methyltransferase (Brucella abortus (strain S19)).